The chain runs to 458 residues: Probable alpha-L-glutamate ligase (458 aa).

Residues 1 to 162 (MSDNKFIIGS…YGVKTAKKSG (162 aa)) form a unknown region. The interval 163-458 (LKIGLLASNP…IEKKLGWKAD (296 aa)) is alpha-L-glutamate ligase. The ATP-grasp domain maps to 267–450 (LQLLQKNNLD…IAGAMIESIE (184 aa)). ATP is bound by residues lysine 304, 341–342 (EF), aspartate 350, and 374–376 (RAN). The Mg(2+) site is built by aspartate 411, glutamate 423, and asparagine 425. Mn(2+)-binding residues include aspartate 411, glutamate 423, and asparagine 425.

In the C-terminal section; belongs to the RimK family. The cofactor is Mg(2+). Mn(2+) is required as a cofactor.

In Shewanella pealeana (strain ATCC 700345 / ANG-SQ1), this protein is Probable alpha-L-glutamate ligase.